Reading from the N-terminus, the 554-residue chain is Glucose-6-phosphate isomerase (554 aa).

Glu-359 functions as the Proton donor in the catalytic mechanism. Catalysis depends on residues His-390 and Lys-518.

Belongs to the GPI family.

The protein localises to the cytoplasm. The catalysed reaction is alpha-D-glucose 6-phosphate = beta-D-fructose 6-phosphate. It participates in carbohydrate biosynthesis; gluconeogenesis. The protein operates within carbohydrate degradation; glycolysis; D-glyceraldehyde 3-phosphate and glycerone phosphate from D-glucose: step 2/4. Its function is as follows. Catalyzes the reversible isomerization of glucose-6-phosphate to fructose-6-phosphate. This is Glucose-6-phosphate isomerase from Pseudomonas putida (strain W619).